A 90-amino-acid polypeptide reads, in one-letter code: Protein LURE 1.2 (90 aa).

Positions 1 to 19 (MKLPIIFLTLLIFVSSCTS) are cleaved as a signal peptide. The N-linked (GlcNAc...) asparagine glycan is linked to N23. 3 disulfide bridges follow: C58–C75, C61–C82, and C65–C84. A PRK6 binding region spans residues 67-87 (RRGKYIRTCSFERKLCRCSIS).

Belongs to the DEFL family. In terms of assembly, interacts with MDIS1, MIK1, MIK2 and TDR/PXY, but not with MDIS2. Binds to PRK6 LRRs. As to expression, expressed in the pistil. Detected exclusively in the synergid cells.

It is found in the secreted. In terms of biological role, pollen tube attractants guiding pollen tubes to the ovular micropyle. Attracts specifically pollen tubes from A.thaliana, but not those from A.lyrata. Triggers endocytosis of MDIS1 in the pollen tube tip. This chain is Protein LURE 1.2, found in Arabidopsis thaliana (Mouse-ear cress).